The following is a 114-amino-acid chain: Histone H2A.Z-specific chaperone chz-1 (114 aa).

Polar residues predominate over residues 1–22 (MSTENGTTDTTLAGTAEANTPF). The interval 1–114 (MSTENGTTDT…FVPEDEEMEE (114 aa)) is disordered. Positions 24–40 (SKGKGKAAAESEDHPMG) are enriched in basic and acidic residues. 2 stretches are compositionally biased toward acidic residues: residues 41 to 68 (EAED…EEID) and 93 to 114 (PAEE…EMEE).

The protein belongs to the CHZ1 family. Forms a heterotrimer with H2A.Z-H2B, stabilizing the association of the histone dimer. Also, with a lower affinity, forms a heterotrimer with H2A-H2B.

The protein resides in the nucleus. Forms a chaperone-bound H2A.Z-H2B complex that acts as a source for SWR1 complex-dependent H2A to H2A.Z histone replacement in chromatin. This Neurospora crassa (strain ATCC 24698 / 74-OR23-1A / CBS 708.71 / DSM 1257 / FGSC 987) protein is Histone H2A.Z-specific chaperone chz-1 (chz-1).